We begin with the raw amino-acid sequence, 942 residues long: Leucine--tRNA ligase 1 (942 aa).

The 'HIGH' region motif lies at Pro39–His49. Residues Lys624–Ser628 carry the 'KMSKS' region motif. Lys627 serves as a coordination point for ATP.

The protein belongs to the class-I aminoacyl-tRNA synthetase family.

The protein localises to the cytoplasm. The enzyme catalyses tRNA(Leu) + L-leucine + ATP = L-leucyl-tRNA(Leu) + AMP + diphosphate. This chain is Leucine--tRNA ligase 1, found in Sulfolobus acidocaldarius (strain ATCC 33909 / DSM 639 / JCM 8929 / NBRC 15157 / NCIMB 11770).